The following is a 177-amino-acid chain: ATP synthase subunit delta (177 aa).

The protein belongs to the ATPase delta chain family. F-type ATPases have 2 components, F(1) - the catalytic core - and F(0) - the membrane proton channel. F(1) has five subunits: alpha(3), beta(3), gamma(1), delta(1), epsilon(1). F(0) has three main subunits: a(1), b(2) and c(10-14). The alpha and beta chains form an alternating ring which encloses part of the gamma chain. F(1) is attached to F(0) by a central stalk formed by the gamma and epsilon chains, while a peripheral stalk is formed by the delta and b chains.

The protein resides in the cell inner membrane. Functionally, f(1)F(0) ATP synthase produces ATP from ADP in the presence of a proton or sodium gradient. F-type ATPases consist of two structural domains, F(1) containing the extramembraneous catalytic core and F(0) containing the membrane proton channel, linked together by a central stalk and a peripheral stalk. During catalysis, ATP synthesis in the catalytic domain of F(1) is coupled via a rotary mechanism of the central stalk subunits to proton translocation. In terms of biological role, this protein is part of the stalk that links CF(0) to CF(1). It either transmits conformational changes from CF(0) to CF(1) or is implicated in proton conduction. The polypeptide is ATP synthase subunit delta (Neisseria meningitidis serogroup C (strain 053442)).